The primary structure comprises 399 residues: S-adenosylmethionine synthase (399 aa).

Histidine 17 contacts ATP. A Mg(2+)-binding site is contributed by aspartate 19. Glutamate 45 lines the K(+) pocket. Glutamate 58 and glutamine 101 together coordinate L-methionine. A flexible loop region spans residues 101–111; that stretch reads QSADIAMGVDQ. Residues 177–179, 244–245, aspartate 253, 259–260, alanine 276, and lysine 280 contribute to the ATP site; these read DGK, RF, and RK. Position 253 (aspartate 253) interacts with L-methionine. Position 284 (lysine 284) interacts with L-methionine.

The protein belongs to the AdoMet synthase family. Homotetramer; dimer of dimers. Requires Mg(2+) as cofactor. The cofactor is K(+).

The protein localises to the cytoplasm. The enzyme catalyses L-methionine + ATP + H2O = S-adenosyl-L-methionine + phosphate + diphosphate. The protein operates within amino-acid biosynthesis; S-adenosyl-L-methionine biosynthesis; S-adenosyl-L-methionine from L-methionine: step 1/1. In terms of biological role, catalyzes the formation of S-adenosylmethionine (AdoMet) from methionine and ATP. The overall synthetic reaction is composed of two sequential steps, AdoMet formation and the subsequent tripolyphosphate hydrolysis which occurs prior to release of AdoMet from the enzyme. This chain is S-adenosylmethionine synthase, found in Bacillus cereus (strain ATCC 10987 / NRS 248).